The primary structure comprises 652 residues: DNA mismatch repair protein MutL (652 aa).

The protein belongs to the DNA mismatch repair MutL/HexB family.

Its function is as follows. This protein is involved in the repair of mismatches in DNA. It is required for dam-dependent methyl-directed DNA mismatch repair. May act as a 'molecular matchmaker', a protein that promotes the formation of a stable complex between two or more DNA-binding proteins in an ATP-dependent manner without itself being part of a final effector complex. The chain is DNA mismatch repair protein MutL from Neorickettsia sennetsu (strain ATCC VR-367 / Miyayama) (Ehrlichia sennetsu).